We begin with the raw amino-acid sequence, 356 residues long: Tyrosine recombinase XerS (356 aa).

In terms of domain architecture, Core-binding (CB) spans 16–121; that stretch reads IMPWYVLDYY…ALSSLYKYLT (106 aa). The Tyr recombinase domain maps to 169 to 354; the sequence is AFLDYVDKEY…VNDEQKNALD (186 aa). Catalysis depends on residues R210, K234, H306, R309, and H332. Y341 functions as the O-(3'-phospho-DNA)-tyrosine intermediate in the catalytic mechanism.

Belongs to the 'phage' integrase family. XerS subfamily.

Its subcellular location is the cytoplasm. With respect to regulation, ftsK is required for recombination. In terms of biological role, site-specific tyrosine recombinase, which acts by catalyzing the cutting and rejoining of the recombining DNA molecules. Essential to convert dimers of the bacterial chromosome into monomers to permit their segregation at cell division. The protein is Tyrosine recombinase XerS of Streptococcus pyogenes serotype M49 (strain NZ131).